The chain runs to 446 residues: Actin-related protein 6 (446 aa).

Residues 1-11 show a composition bias toward basic residues; sequence MTGRGGAKKSR. The disordered stretch occupies residues 1–24; sequence MTGRGGAKKSRAAGPAPPTTTLVL.

Belongs to the actin family. ARP6 subfamily. Component of the SWR1 chromatin remodeling complex.

The protein resides in the cytoplasm. The protein localises to the cytoskeleton. It is found in the nucleus. Functionally, component of the SWR1 complex which mediates the ATP-dependent exchange of histone H2A for the H2A variant H2A.Z leading to transcriptional regulation of selected genes by chromatin remodeling. Involved in chromosome stability. The protein is Actin-related protein 6 (arp-6) of Neurospora crassa (strain ATCC 24698 / 74-OR23-1A / CBS 708.71 / DSM 1257 / FGSC 987).